The following is a 222-amino-acid chain: Large ribosomal subunit protein uL4 (222 aa).

The protein belongs to the universal ribosomal protein uL4 family. As to quaternary structure, part of the 50S ribosomal subunit.

One of the primary rRNA binding proteins, this protein initially binds near the 5'-end of the 23S rRNA. It is important during the early stages of 50S assembly. It makes multiple contacts with different domains of the 23S rRNA in the assembled 50S subunit and ribosome. Functionally, forms part of the polypeptide exit tunnel. In Methylacidiphilum infernorum (isolate V4) (Methylokorus infernorum (strain V4)), this protein is Large ribosomal subunit protein uL4.